Consider the following 336-residue polypeptide: Transcription factor MYB29 (336 aa).

2 consecutive HTH myb-type domains span residues Gly-9 to Ile-65 and Lys-66 to Leu-116. DNA-binding regions (H-T-H motif) lie at residues Trp-37 to Leu-61 and Trp-89 to Leu-112. The interval Lys-127–Asp-170 is disordered. Residues Ser-141–Ser-154 are compositionally biased toward low complexity. Polar residues predominate over residues Lys-155–Asp-164.

In terms of assembly, can form complexes with MYC2, MYC3 or MYC4. In terms of tissue distribution, expressed in both vegetative and generative organs. Mostly present in seedlings, inflorescences, roots and stems, and, to a lower extent, in leaves (in midvein and trichomes) and siliques.

The protein localises to the nucleus. Its function is as follows. Plays a minor rheostat role in aliphatic glucosinolates (GLSs) biosynthesis, mostly short chained. Together with MYB28/HAG1 and MYB76/HAG2, promotes aliphatic glucosinolate biosynthesis but represses indolic glucosinolate biosynthesis. Prevents insect performance (e.g. lepidopteran insect Mamestra brassicae) by promoting glucosinolates. This is Transcription factor MYB29 (MYB29) from Arabidopsis thaliana (Mouse-ear cress).